We begin with the raw amino-acid sequence, 786 residues long: Endonuclease MutS2 (786 aa).

G335 to T342 provides a ligand contact to ATP. In terms of domain architecture, Smr spans L711 to K786.

This sequence belongs to the DNA mismatch repair MutS family. MutS2 subfamily. As to quaternary structure, homodimer. Binds to stalled ribosomes, contacting rRNA.

Endonuclease that is involved in the suppression of homologous recombination and thus may have a key role in the control of bacterial genetic diversity. Functionally, acts as a ribosome collision sensor, splitting the ribosome into its 2 subunits. Detects stalled/collided 70S ribosomes which it binds and splits by an ATP-hydrolysis driven conformational change. Acts upstream of the ribosome quality control system (RQC), a ribosome-associated complex that mediates the extraction of incompletely synthesized nascent chains from stalled ribosomes and their subsequent degradation. Probably generates substrates for RQC. In Bacillus cytotoxicus (strain DSM 22905 / CIP 110041 / 391-98 / NVH 391-98), this protein is Endonuclease MutS2.